An 806-amino-acid chain; its full sequence is Leucine--tRNA ligase (806 aa).

The short motif at 38–48 is the 'HIGH' region element; the sequence is PYPSGEIHMGH. Residues 572–576 carry the 'KMSKS' region motif; the sequence is KMSKS. Lys-575 is an ATP binding site.

Belongs to the class-I aminoacyl-tRNA synthetase family.

The protein localises to the cytoplasm. It catalyses the reaction tRNA(Leu) + L-leucine + ATP = L-leucyl-tRNA(Leu) + AMP + diphosphate. In Helicobacter pylori (strain HPAG1), this protein is Leucine--tRNA ligase.